A 352-amino-acid polypeptide reads, in one-letter code: Transcription factor RSL2 (352 aa).

Residues 160–169 (SVTTTKSLTG) show a composition bias toward polar residues. The disordered stretch occupies residues 160 to 277 (SVTTTKSLTG…ASRGAATDPQ (118 aa)). Over residues 183 to 192 (KRARVNKRAQ) the composition is skewed to basic residues. Polar residues predominate over residues 223–232 (SRQNSSTTFC). A basic motif region spans residues 272-285 (AATDPQSLYARKRR). In terms of domain architecture, bHLH spans 272 to 321 (AATDPQSLYARKRRERINERLRILQNLVPNGTKVDISTMLEEAVHYVKFL). The segment at 286–321 (ERINERLRILQNLVPNGTKVDISTMLEEAVHYVKFL) is helix-loop-helix motif.

As to quaternary structure, homodimer. In terms of tissue distribution, expressed in roots. Expressed in root epidermal hair cells.

The protein resides in the nucleus. Its function is as follows. Transcription factor involved in the regulation of root hair elongation. Does not seem to be a direct transcriptional target of RHD6 and RSL1. Involved in the regulation of root hair elongation in response to low phosphate. The polypeptide is Transcription factor RSL2 (Arabidopsis thaliana (Mouse-ear cress)).